The primary structure comprises 226 residues: Clarin-3 (226 aa).

The helical transmembrane segment at L8 to L28 threads the bilayer. N46 is a glycosylation site (N-linked (GlcNAc...) asparagine). 3 helical membrane-spanning segments follow: residues V92–F112, G128–V148, and F181–Y201.

It belongs to the clarin family.

It localises to the membrane. The sequence is that of Clarin-3 (Clrn3) from Mus musculus (Mouse).